The chain runs to 272 residues: Large ribosomal subunit protein uL2 (272 aa).

The tract at residues 222-272 (GTAMNPVDHPHGGGEGRNFGKHPVSPWGKKTKGKKTRNNRLTDKFIVHRRS) is disordered. Residues 250-259 (KKTKGKKTRN) are compositionally biased toward basic residues. Over residues 261–272 (RLTDKFIVHRRS) the composition is skewed to basic and acidic residues.

It belongs to the universal ribosomal protein uL2 family. Part of the 50S ribosomal subunit. Forms a bridge to the 30S subunit in the 70S ribosome.

Its function is as follows. One of the primary rRNA binding proteins. Required for association of the 30S and 50S subunits to form the 70S ribosome, for tRNA binding and peptide bond formation. It has been suggested to have peptidyltransferase activity; this is somewhat controversial. Makes several contacts with the 16S rRNA in the 70S ribosome. The protein is Large ribosomal subunit protein uL2 of Baumannia cicadellinicola subsp. Homalodisca coagulata.